A 275-amino-acid polypeptide reads, in one-letter code: Dermonecrotic toxin SpeSicTox-betaIIA2iii (275 aa).

Residue His-5 is part of the active site. Mg(2+) is bound by residues Glu-25 and Asp-27. Catalysis depends on His-41, which acts as the Nucleophile. 2 disulfides stabilise this stretch: Cys-45–Cys-51 and Cys-47–Cys-190. Asp-85 contacts Mg(2+).

Belongs to the arthropod phospholipase D family. Class II subfamily. Mg(2+) serves as cofactor. As to expression, expressed by the venom gland.

The protein localises to the secreted. The enzyme catalyses an N-(acyl)-sphingosylphosphocholine = an N-(acyl)-sphingosyl-1,3-cyclic phosphate + choline. The catalysed reaction is an N-(acyl)-sphingosylphosphoethanolamine = an N-(acyl)-sphingosyl-1,3-cyclic phosphate + ethanolamine. It catalyses the reaction a 1-acyl-sn-glycero-3-phosphocholine = a 1-acyl-sn-glycero-2,3-cyclic phosphate + choline. It carries out the reaction a 1-acyl-sn-glycero-3-phosphoethanolamine = a 1-acyl-sn-glycero-2,3-cyclic phosphate + ethanolamine. Functionally, dermonecrotic toxins cleave the phosphodiester linkage between the phosphate and headgroup of certain phospholipids (sphingolipid and lysolipid substrates), forming an alcohol (often choline) and a cyclic phosphate. This toxin acts on sphingomyelin (SM). It may also act on ceramide phosphoethanolamine (CPE), lysophosphatidylcholine (LPC) and lysophosphatidylethanolamine (LPE), but not on lysophosphatidylserine (LPS), and lysophosphatidylglycerol (LPG). It acts by transphosphatidylation, releasing exclusively cyclic phosphate products as second products. Induces dermonecrosis, hemolysis, increased vascular permeability, edema, inflammatory response, and platelet aggregation. The chain is Dermonecrotic toxin SpeSicTox-betaIIA2iii from Sicarius peruensis (Six-eyed sand spider).